Consider the following 1193-residue polypeptide: DNA-directed RNA polymerase subunit beta (1193 aa).

Positions 1152 to 1161 (IEMRDLEDDE) are enriched in acidic residues. The disordered stretch occupies residues 1152–1193 (IEMRDLEDDEETKKADGLALSNDEDAADLAPVDLERDAVTKE). Residues 1184–1193 (DLERDAVTKE) are compositionally biased toward basic and acidic residues.

Belongs to the RNA polymerase beta chain family. The RNAP catalytic core consists of 2 alpha, 1 beta, 1 beta' and 1 omega subunit. When a sigma factor is associated with the core the holoenzyme is formed, which can initiate transcription.

It catalyses the reaction RNA(n) + a ribonucleoside 5'-triphosphate = RNA(n+1) + diphosphate. Functionally, DNA-dependent RNA polymerase catalyzes the transcription of DNA into RNA using the four ribonucleoside triphosphates as substrates. This Bacillus pumilus (strain SAFR-032) protein is DNA-directed RNA polymerase subunit beta.